The chain runs to 480 residues: Glycogen synthase (480 aa).

Lys-15 contributes to the ADP-alpha-D-glucose binding site.

It belongs to the glycosyltransferase 1 family. Bacterial/plant glycogen synthase subfamily.

The catalysed reaction is [(1-&gt;4)-alpha-D-glucosyl](n) + ADP-alpha-D-glucose = [(1-&gt;4)-alpha-D-glucosyl](n+1) + ADP + H(+). It participates in glycan biosynthesis; glycogen biosynthesis. In terms of biological role, synthesizes alpha-1,4-glucan chains using ADP-glucose. This is Glycogen synthase from Opitutus terrae (strain DSM 11246 / JCM 15787 / PB90-1).